A 126-amino-acid chain; its full sequence is Probable V-type proton ATPase subunit G (126 aa).

The protein belongs to the V-ATPase G subunit family. In terms of assembly, V-ATPase is a heteromultimeric enzyme made up of two complexes: the ATP-hydrolytic V1 complex and the proton translocation V0 complex. The V1 complex consists of three catalytic AB heterodimers that form a heterohexamer, three peripheral stalks each consisting of EG heterodimers, one central rotor including subunits D and F, and the regulatory subunits C and H. The proton translocation complex V0 consists of the proton transport subunit a, a ring of proteolipid subunits c9c'', rotary subunit d, subunits e and f, and the accessory subunits vah-19/Ac45 and vah-20/PRR. Interacts with ced-1.

Its function is as follows. Subunit of the V1 complex of vacuolar(H+)-ATPase (V-ATPase), a multisubunit enzyme composed of a peripheral complex (V1) that hydrolyzes ATP and a membrane integral complex (V0) that translocates protons. V-ATPase is responsible for acidifying and maintaining the pH of intracellular compartments and in some cell types, is targeted to the plasma membrane, where it is responsible for acidifying the extracellular environment. In neurons, required for necrotic cell death by promoting intracellular acidification. The chain is Probable V-type proton ATPase subunit G from Caenorhabditis elegans.